We begin with the raw amino-acid sequence, 145 residues long: Large ribosomal subunit protein uL15 (145 aa).

Residues 1-11 (MELHSLKSTPG) are compositionally biased toward polar residues. A disordered region spans residues 1–48 (MELHSLKSTPGSRKEKHRKGRGHAAGKGKQAGKGQSGQRKRSKVRLGF). Over residues 14 to 26 (KEKHRKGRGHAAG) the composition is skewed to basic residues.

It belongs to the universal ribosomal protein uL15 family. As to quaternary structure, part of the 50S ribosomal subunit.

Functionally, binds to the 23S rRNA. This Mycoplasmopsis pulmonis (strain UAB CTIP) (Mycoplasma pulmonis) protein is Large ribosomal subunit protein uL15.